A 96-amino-acid chain; its full sequence is Cytochrome c-553 (96 aa).

Residues methionine 1–alanine 19 form the signal peptide. Heme c-binding residues include cysteine 29, cysteine 32, histidine 33, and methionine 73.

This sequence belongs to the cytochrome c family. Post-translationally, binds 1 heme c group covalently per subunit.

It localises to the periplasm. In terms of biological role, natural electron acceptor for a formate dehydrogenase. This is Cytochrome c-553 from Helicobacter pylori (strain ATCC 700392 / 26695) (Campylobacter pylori).